The sequence spans 528 residues: Phosphoenolpyruvate carboxykinase (ATP) (528 aa).

Substrate contacts are provided by Arg56, Tyr192, and Lys198. Residues Lys198, His217, and 233 to 241 (GLSGTGKTT) each bind ATP. Residues Lys198 and His217 each contribute to the Mn(2+) site. Position 254 (Asp254) interacts with Mn(2+). Positions 282, 319, and 444 each coordinate ATP. Position 319 (Arg319) interacts with substrate.

This sequence belongs to the phosphoenolpyruvate carboxykinase (ATP) family. It depends on Mn(2+) as a cofactor.

It is found in the cytoplasm. It catalyses the reaction oxaloacetate + ATP = phosphoenolpyruvate + ADP + CO2. It participates in carbohydrate biosynthesis; gluconeogenesis. Its function is as follows. Involved in the gluconeogenesis. Catalyzes the conversion of oxaloacetate (OAA) to phosphoenolpyruvate (PEP) through direct phosphoryl transfer between the nucleoside triphosphate and OAA. The protein is Phosphoenolpyruvate carboxykinase (ATP) of Bacillus cereus (strain 03BB102).